Reading from the N-terminus, the 119-residue chain is MNLEAYFPVLLFIVVGVGLGLALMTIGRVLGPNNPDPDKLSPYECGFEAFEDARMKFDVRYYLIAILFILFDLETAFLFPWGVALREIGWPGFFAMGVFLLEFLVGFVYIWKKGALDWE.

The next 3 helical transmembrane spans lie at 7–27 (FPVLLFIVVGVGLGLALMTIG), 63–83 (LIAILFILFDLETAFLFPWGV), and 88–108 (IGWPGFFAMGVFLLEFLVGFV).

Belongs to the complex I subunit 3 family. NDH-1 is composed of 14 different subunits. Subunits NuoA, H, J, K, L, M, N constitute the membrane sector of the complex.

It is found in the cell inner membrane. It carries out the reaction a quinone + NADH + 5 H(+)(in) = a quinol + NAD(+) + 4 H(+)(out). In terms of biological role, NDH-1 shuttles electrons from NADH, via FMN and iron-sulfur (Fe-S) centers, to quinones in the respiratory chain. The immediate electron acceptor for the enzyme in this species is believed to be ubiquinone. Couples the redox reaction to proton translocation (for every two electrons transferred, four hydrogen ions are translocated across the cytoplasmic membrane), and thus conserves the redox energy in a proton gradient. This chain is NADH-quinone oxidoreductase subunit A, found in Ralstonia pickettii (strain 12J).